We begin with the raw amino-acid sequence, 618 residues long: Protease 4 (618 aa).

Over 1–24 (MRTLWRFIAGFFKWTWRVLNFVRE) the chain is Cytoplasmic. Residues 25–45 (MVLNLFFIFLVLVGVGIWMQI) form a helical membrane-spanning segment. Over 46–618 (GNGSNSEQTA…AFCLTCANVR (573 aa)) the chain is Periplasmic. K209 serves as the catalytic Proton donor/acceptor. Catalysis depends on S409, which acts as the Nucleophile.

The protein belongs to the peptidase S49 family. As to quaternary structure, homotetramer.

The protein localises to the cell inner membrane. Functionally, digests cleaved signal peptides in vitro, its in vivo function is unknown. This activity is necessary to maintain proper secretion of mature proteins across the membrane. The protein is Protease 4 (sppA) of Salmonella typhi.